The following is a 287-amino-acid chain: Aquaporin PIP2-1 (287 aa).

Residue Met1 is modified to N-acetylmethionine. Residues 2–39 (AKDVEAVPGEGFQTRDYQDPPPAPFIDGAELKKWSFYR) are Cytoplasmic-facing. Lys3 carries the N6,N6-dimethyllysine; partial modification. Residues 40–60 (AVIAEFVATLLFLYITVLTVI) form a helical membrane-spanning segment. Topologically, residues 61 to 83 (GYKIQSDTDAGGVDCGGVGILGI) are extracellular. A helical membrane pass occupies residues 84-104 (AWAFGGMIFILVYCTAGISGG). At 105 to 125 (HINPAVTFGLFLARKVSLPRA) the chain is on the cytoplasmic side. Residues 107–109 (NPA) carry the NPA 1 motif. A helical transmembrane segment spans residues 126 to 146 (LLYIIAQCLGAICGVGFVKAF). Over 147–167 (QSSYYTRYGGGANSLADGYST) the chain is Extracellular. The helical transmembrane segment at 168–188 (GTGLAAEIIGTFVLVYTVFSA) threads the bilayer. Residues 189 to 201 (TDPKRSARDSHVP) lie on the Cytoplasmic side of the membrane. The chain crosses the membrane as a helical span at residues 202 to 222 (VLAPLPIGFAVFMVHLATIPI). Residues 223-249 (TGTGINPARSFGAAVIYNKSKPWDDHW) lie on the Extracellular side of the membrane. The NPA 2 signature appears at 228–230 (NPA). Residues 250–270 (IFWVGPFIGAAIAAFYHQFVL) traverse the membrane as a helical segment. Residues 271–287 (RASGSKSLGSFRSAANV) lie on the Cytoplasmic side of the membrane. 2 positions are modified to phosphoserine: Ser280 and Ser283.

The protein belongs to the MIP/aquaporin (TC 1.A.8) family. PIP (TC 1.A.8.11) subfamily. In terms of processing, ubiquitinated by RMA1, leading to proteasomal degradation. Post-translationally, the phosphorylation at Ser-280 and Ser-283 is altered by salt (NaCl) and hydrogen peroxide H(2)O(2) treatments. Phosphorylation of Ser-283 is required for plasma membrane targeting. Predominantly expressed in roots and green siliques. Also expressed at lower level above ground and in flower buds.

The protein localises to the cell membrane. In terms of biological role, water channel required to facilitate the transport of water across cell membrane. Probably involved in root water uptake. Its function is impaired by Hg(2+). The sequence is that of Aquaporin PIP2-1 (PIP2-1) from Arabidopsis thaliana (Mouse-ear cress).